The sequence spans 252 residues: Phosphate import ATP-binding protein PstB 1 (252 aa).

In terms of domain architecture, ABC transporter spans 6 to 247; it reads LQIRDLSVYY…PKRKETEDYI (242 aa). 38–45 contacts ATP; that stretch reads GPSGSGKS.

It belongs to the ABC transporter superfamily. Phosphate importer (TC 3.A.1.7) family. The complex is composed of two ATP-binding proteins (PstB), two transmembrane proteins (PstC and PstA) and a solute-binding protein (PstS).

Its subcellular location is the cell membrane. The catalysed reaction is phosphate(out) + ATP + H2O = ADP + 2 phosphate(in) + H(+). In terms of biological role, part of the ABC transporter complex PstSACB involved in phosphate import. Responsible for energy coupling to the transport system. In Streptococcus pyogenes serotype M6 (strain ATCC BAA-946 / MGAS10394), this protein is Phosphate import ATP-binding protein PstB 1.